Reading from the N-terminus, the 146-residue chain is Ribonuclease H (146 aa).

Residues 1-143 enclose the RNase H type-1 domain; the sequence is MQKKITIYTD…CDELARQAIQ (143 aa). D10, E48, D70, and D135 together coordinate Mg(2+).

The protein belongs to the RNase H family. In terms of assembly, monomer. It depends on Mg(2+) as a cofactor.

The protein resides in the cytoplasm. It carries out the reaction Endonucleolytic cleavage to 5'-phosphomonoester.. Its function is as follows. Endonuclease that specifically degrades the RNA of RNA-DNA hybrids. The polypeptide is Ribonuclease H (Chlorobium luteolum (strain DSM 273 / BCRC 81028 / 2530) (Pelodictyon luteolum)).